The primary structure comprises 653 residues: Translation factor GUF1, mitochondrial (653 aa).

A tr-type G domain is found at 56–236 (ENYRNFSIVA…SIIKNIPAPN (181 aa)). GTP-binding positions include 65-72 (AHVDHGKS), 129-133 (DTPGH), and 183-186 (NKID).

Belongs to the TRAFAC class translation factor GTPase superfamily. Classic translation factor GTPase family. LepA subfamily.

It is found in the mitochondrion inner membrane. It carries out the reaction GTP + H2O = GDP + phosphate + H(+). Promotes mitochondrial protein synthesis. May act as a fidelity factor of the translation reaction, by catalyzing a one-codon backward translocation of tRNAs on improperly translocated ribosomes. Binds to mitochondrial ribosomes in a GTP-dependent manner. In Candida tropicalis (strain ATCC MYA-3404 / T1) (Yeast), this protein is Translation factor GUF1, mitochondrial.